Consider the following 254-residue polypeptide: Thiazole synthase (254 aa).

Lys-96 (schiff-base intermediate with DXP) is an active-site residue. Residues Gly-157, 183 to 184 (AG), and 205 to 206 (NT) each bind 1-deoxy-D-xylulose 5-phosphate.

It belongs to the ThiG family. In terms of assembly, homotetramer. Forms heterodimers with either ThiH or ThiS.

It localises to the cytoplasm. It carries out the reaction [ThiS sulfur-carrier protein]-C-terminal-Gly-aminoethanethioate + 2-iminoacetate + 1-deoxy-D-xylulose 5-phosphate = [ThiS sulfur-carrier protein]-C-terminal Gly-Gly + 2-[(2R,5Z)-2-carboxy-4-methylthiazol-5(2H)-ylidene]ethyl phosphate + 2 H2O + H(+). Its pathway is cofactor biosynthesis; thiamine diphosphate biosynthesis. Functionally, catalyzes the rearrangement of 1-deoxy-D-xylulose 5-phosphate (DXP) to produce the thiazole phosphate moiety of thiamine. Sulfur is provided by the thiocarboxylate moiety of the carrier protein ThiS. In vitro, sulfur can be provided by H(2)S. The sequence is that of Thiazole synthase from Clostridium kluyveri (strain ATCC 8527 / DSM 555 / NBRC 12016 / NCIMB 10680 / K1).